A 385-amino-acid chain; its full sequence is Urotensin-2 receptor (385 aa).

The Extracellular segment spans residues 1–53; that stretch reads MALSLESTSFPMLAVSRSTASELPGGFNVSHNSSWTGPTDPSSLQDLVATGVI. Asparagine 28 and asparagine 32 each carry an N-linked (GlcNAc...) asparagine glycan. The helical transmembrane segment at 54–76 threads the bilayer; sequence GAVLSTMGVVGVVGNVYTLVVMC. At 77-86 the chain is on the cytoplasmic side; that stretch reads RFLRASASMY. A helical membrane pass occupies residues 87 to 112; the sequence is VYVVNLALADLLYLLSIPFIVATYVT. At 113–123 the chain is on the extracellular side; sequence KDWHFGDVGCR. Residues cysteine 122 and cysteine 198 are joined by a disulfide bond. The chain crosses the membrane as a helical span at residues 124-145; it reads VLFSLDFLTMHASIFTLTIMSS. At 146–166 the chain is on the cytoplasmic side; that stretch reads ERYAAVLRPLDTVQRSKGYRK. The chain crosses the membrane as a helical span at residues 167-185; that stretch reads LLALGTWLLALLLTLPMML. The Extracellular portion of the chain corresponds to 186–208; the sequence is AIRLVRRGSKSLCLPAWGPRAHR. The helical transmembrane segment at 209–231 threads the bilayer; sequence TYLTLLFGTSIVGPGLVIGLLYI. The Cytoplasmic segment spans residues 232-257; that stretch reads RLARAYWLSQQASFKQTRRLPNPRVL. A helical membrane pass occupies residues 258–283; the sequence is YLILGIVLLFWACFLPFWLWQLLAQY. At 284–298 the chain is on the extracellular side; that stretch reads HQAMPLTPETARIIN. Residues 299-320 traverse the membrane as a helical segment; that stretch reads YLTACLTYGNSCINPFLYTLLT. Residues 321-385 are Cytoplasmic-facing; sequence KNYREYLRGR…SPVPPNGAFV (65 aa).

This sequence belongs to the G-protein coupled receptor 1 family.

It is found in the cell membrane. Functionally, high affinity receptor for urotensin-2 and urotensin-2B. The activity of this receptor is mediated by a G-protein that activate a phosphatidylinositol-calcium second messenger system. The chain is Urotensin-2 receptor (Uts2r) from Mus musculus (Mouse).